Consider the following 489-residue polypeptide: Glutamyl-tRNA(Gln) amidotransferase subunit A (489 aa).

Active-site charge relay system residues include Lys-80 and Ser-160. Ser-184 acts as the Acyl-ester intermediate in catalysis.

This sequence belongs to the amidase family. GatA subfamily. Heterotrimer of A, B and C subunits.

It catalyses the reaction L-glutamyl-tRNA(Gln) + L-glutamine + ATP + H2O = L-glutaminyl-tRNA(Gln) + L-glutamate + ADP + phosphate + H(+). Allows the formation of correctly charged Gln-tRNA(Gln) through the transamidation of misacylated Glu-tRNA(Gln) in organisms which lack glutaminyl-tRNA synthetase. The reaction takes place in the presence of glutamine and ATP through an activated gamma-phospho-Glu-tRNA(Gln). This Wolbachia pipientis wMel protein is Glutamyl-tRNA(Gln) amidotransferase subunit A.